A 133-amino-acid polypeptide reads, in one-letter code: MAKAPNTAAQRVRKKVRKNVSDGVAHVHASFNNTIITITDRQGNALAWASSGGQGFKGSRKSTPFAAQVAAEVAGRAAQDQGIKNLEVEIKGPGPGRESSVRALAALGIRIVSISDVTPVPHNGCRPQKRRRI.

It belongs to the universal ribosomal protein uS11 family. As to quaternary structure, part of the 30S ribosomal subunit. Interacts with proteins S7 and S18. Binds to IF-3.

Located on the platform of the 30S subunit, it bridges several disparate RNA helices of the 16S rRNA. Forms part of the Shine-Dalgarno cleft in the 70S ribosome. The protein is Small ribosomal subunit protein uS11 of Methylibium petroleiphilum (strain ATCC BAA-1232 / LMG 22953 / PM1).